The following is a 443-amino-acid chain: Histone deacetylase 10, chloroplastic (443 aa).

A chloroplast-targeting transit peptide spans 1–65 (MEQLWVPSLP…PSHNGTSISD (65 aa)). The interval 82-412 (DAHILYCTSP…FRAFLGEPSL (331 aa)) is histone deacetylase. The Proton donor/acceptor role is filled by H222. 3 residues coordinate Zn(2+): D259, H261, and D346.

Belongs to the histone deacetylase family. It depends on Zn(2+) as a cofactor. Expressed in leaves. Expressed in coleoptiles, leaves, flag leaves and flowers. Expressed at low levels in roots.

Its subcellular location is the plastid. The protein resides in the chloroplast. The protein localises to the mitochondrion. It carries out the reaction N-acetylserotonin + H2O = serotonin + acetate. The enzyme catalyses N-acetyltyramine + H2O = tyramine + acetate. It catalyses the reaction N-acetyltryptamine + H2O = tryptamine + acetate. The catalysed reaction is melatonin + H2O = 5-methoxytryptamine + acetate. The activity of this enzyme is not inhibited by butyrate, a well-known histone deacetylase inhibitor. Its function is as follows. Involved in the regulation of melatonin biosynthesis by catalyzing the deacetylation of N-acetylserotonin to produce serotonin. N-acetylserotonin is methylated by acetylserotonin O-methyltransferase (ASMT) to produce melatonin (N-acetyl-5-methoxytryptamine). Deacetylates melatonin to produce 5-methoxytryptamine. In vitro, deacetylates N-acetyltyramine and N-acetyltryptamine to produce tyramine and tryptamine, respectively. This Oryza sativa subsp. japonica (Rice) protein is Histone deacetylase 10, chloroplastic.